The following is a 477-amino-acid chain: (R)-2-hydroxyglutaryl-CoA dehydratase, subunit alpha (477 aa).

Belongs to the FldB/FldC dehydratase alpha/beta subunit family. The (R)-2-hydroxyglutaryl-CoA dehydratase enzyme system is a heterodimer composed of an alpha subunit (HgdA) and a beta subunit (HgdB). It depends on [4Fe-4S] cluster as a cofactor. FMN serves as cofactor. Requires Mg(2+) as cofactor.

The protein localises to the cytoplasm. The catalysed reaction is (R)-2-hydroxyglutaryl-CoA = (2E)-glutaconyl-CoA + H2O. It functions in the pathway amino-acid degradation; L-glutamate degradation via hydroxyglutarate pathway; crotonoyl-CoA from L-glutamate: step 4/5. Activated by the HgdC. Reversibly inactivated by oxidants such as 2-nitrophenol, 3-nitrophenol, 4-nitrophenol, 4-nitrobenzoate, carbonyl cyanide 4-(trifluoromethoxy)phenylhydrazone (FCCP) and chloramphenicol. Irreversibly inactivated by oxidants such as hydroxylamine and nitrite. Involved in the fermentation of L-glutamate via the hydroxyglutarate pathway. Catalyzes the reversible syn-elimination of water from (R)-2-hydroxyglutaryl-CoA to yield (E)-glutaconyl-CoA. The dehydration mechanism involves a transient one electron reduction of the thioester from (R)-2-hydroxyglutaryl-CoA, generating a ketyl radical. Prior to (E)-glutaconyl-CoA formation, the ketyl radical is subsequently reoxidized by electron transfer back to the HgdA-HgdB complex (CompD) to avoid change in oxidation state of the substrate. The appropriate redox state of dehydratase HgdA-HgdB complex (CompD) is maintained by HgdC (CompA) via hydrolysis of ATP and ATP-dependent electron transfer. Since the electron is recycled, the dehydratase is able to perform several turnovers with only catalytic amounts of ATP and substoichiometric amounts of HgdC (CompA). The polypeptide is (R)-2-hydroxyglutaryl-CoA dehydratase, subunit alpha (Acidaminococcus fermentans (strain ATCC 25085 / DSM 20731 / CCUG 9996 / CIP 106432 / VR4)).